Reading from the N-terminus, the 889-residue chain is Rho GTPase-activating protein 27 (889 aa).

The SH3 domain maps to 6–69; the sequence is VGDVYVLVEH…PAQYVRELPA (64 aa). Positions 104–132 are disordered; sequence AGPDGAPEESGGRASSLCGPAQRGAATQR. Phosphoserine occurs at positions 156, 216, and 249. 2 consecutive WW domains span residues 246-280 and 299-333; these read PLPSPVWETHTDAGTGRPYYYNPDTGVTTWESPFE and VSLETEWGQYWDEESRRVFFYNPLTGETAWEDEAE. Over residues 329 to 341 the composition is skewed to acidic residues; the sequence is EDEAENEPEEELE. The segment at 329-397 is disordered; that stretch reads EDEAENEPEE…SPLTTPPGWS (69 aa). A Phosphoserine modification is found at Ser-347. Residues 383-395 are compositionally biased toward low complexity; it reads EPGPTSPLTTPPG. Residues 411–444 form the WW 3 domain; the sequence is HFTQEQWVRLEDPHGKPYFYNPEDSSVRWELPQV. A disordered region spans residues 447–474; the sequence is PAPRSIHKSSQDGDTPAQASPPEEKVPA. Position 456 is a phosphoserine (Ser-456). Thr-461 is modified (phosphothreonine). Residue Ser-466 is modified to Phosphoserine. In terms of domain architecture, PH spans 496–612; sequence TLDKAGVLHR…WHKAIAQGIQ (117 aa). The interval 617–655 is disordered; it reads ELPPEESESSRVDFGSSERLGSWQEKEEDARPNAAAPAL. The 190-residue stretch at 697 to 886 folds into the Rho-GAP domain; it reads CALAALCERE…LILQQCADIF (190 aa).

As to quaternary structure, interacts with SH3KBP1/CIN85. Expressed in germinal center B-cell, spleen, chronic lymphocytic leukemia, pancreatic cancer and lung cancer.

The protein localises to the cytoplasm. The protein resides in the membrane. Its function is as follows. Rho GTPase-activating protein which may be involved in clathrin-mediated endocytosis. GTPase activators for the Rho-type GTPases act by converting them to an inactive GDP-bound state. Has activity toward CDC42 and RAC1. This chain is Rho GTPase-activating protein 27, found in Homo sapiens (Human).